A 505-amino-acid polypeptide reads, in one-letter code: Histidine--tRNA ligase (505 aa).

Belongs to the class-II aminoacyl-tRNA synthetase family. As to quaternary structure, homodimer.

The protein localises to the cytoplasm. The enzyme catalyses tRNA(His) + L-histidine + ATP = L-histidyl-tRNA(His) + AMP + diphosphate + H(+). This chain is Histidine--tRNA ligase, found in Jannaschia sp. (strain CCS1).